The primary structure comprises 1320 residues: Transcriptional activator MN1 (1320 aa).

The residue at position 1 (Met1) is an N-acetylmethionine. 9 disordered regions span residues 1–26 (MFGL…FNET), 92–121 (FGGQ…FGGP), 147–219 (PPFA…SLEP), 231–411 (LEYN…EYPI), 423–442 (SEPV…NQRL), 474–615 (NGSM…AGRL), 629–819 (SAWF…KDNL), 840–1150 (GAPN…PDEI), and 1247–1273 (PWEK…SASQ). A compositionally biased stretch (basic residues) spans 98–113 (HHGHPGSHHPHQHHPH). 2 stretches are compositionally biased toward low complexity: residues 202-214 (SFHG…GSDS) and 291-309 (QPPQ…QQQQ). Over residues 338 to 366 (MQPPQQAPPPPQQQPPQQPPQQQPPPPPG) the composition is skewed to pro residues. Over residues 498 to 514 (FTPPVPDSFPSGPPLQH) the composition is skewed to pro residues. Composition is skewed to low complexity over residues 523-550 (QQQQ…QQQQ) and 564-578 (RNQQ…LAQL). Gly residues-rich tracts occupy residues 582-596 (GDVG…GPVG) and 701-710 (QFGGSLGGLG). Positions 759-768 (SGPGVNSPPS) are enriched in low complexity. A compositionally biased stretch (gly residues) spans 769-784 (AGGGGGSSGGGGGGGA). Composition is skewed to low complexity over residues 798 to 809 (SASKLGALSLGS) and 895 to 905 (GTSSSGSKASG). Positions 914-930 (DGTSLSPNYTLESTSGN) are enriched in polar residues. Phosphoserine occurs at positions 950 and 954. A compositionally biased stretch (low complexity) spans 973–984 (GVSPGQQQASGA). Residue Ser1007 is modified to Phosphoserine. Residues 1048–1066 (EVSTSYANEDEVSSSSDNP) show a composition bias toward polar residues. Ser1081 bears the Phosphoserine mark. Over residues 1118-1128 (YGGGGGPGHPG) the composition is skewed to gly residues.

As to quaternary structure, interacts with PBX1, PKNOX1, ZBTB24, E2F7, RING1. Widely expressed in fetal and adult tissues. Highest expression is observed in fetal brain and skeletal muscle, and adult skeletal muscle.

The protein resides in the nucleus. Transcriptional activator which specifically regulates expression of TBX22 in the posterior region of the developing palate. Required during later stages of palate development for growth and medial fusion of the palatal shelves. Promotes maturation and normal function of calvarial osteoblasts, including expression of the osteoclastogenic cytokine TNFSF11/RANKL. Necessary for normal development of the membranous bones of the skull. May play a role in tumor suppression. In Homo sapiens (Human), this protein is Transcriptional activator MN1 (MN1).